A 236-amino-acid chain; its full sequence is Mediator of RNA polymerase II transcription subunit 20 (236 aa).

It belongs to the Mediator complex subunit 20 family. As to quaternary structure, component of the Mediator complex.

It localises to the nucleus. Functionally, component of the Mediator complex, a coactivator involved in the regulated transcription of nearly all RNA polymerase II-dependent genes. Mediator functions as a bridge to convey information from gene-specific regulatory proteins to the basal RNA polymerase II transcription machinery. Mediator is recruited to promoters by direct interactions with regulatory proteins and serves as a scaffold for the assembly of a functional preinitiation complex with RNA polymerase II and the general transcription factors. This is Mediator of RNA polymerase II transcription subunit 20 (SRB2) from Debaryomyces hansenii (strain ATCC 36239 / CBS 767 / BCRC 21394 / JCM 1990 / NBRC 0083 / IGC 2968) (Yeast).